The following is a 395-amino-acid chain: Na(+)/H(+) antiporter NhaA 1 (395 aa).

The next 11 helical transmembrane spans lie at 11–31, 63–83, 99–119, 129–149, 158–178, 183–203, 223–243, 258–278, 282–302, 332–352, and 364–384; these read FFSSDASGGIVLIIAAALAMV, MLLWINDALMAVFFLLIGLEV, VFPVIAALGGMIVPALVYLAF, GWAIPAATDIAFALGVLALLG, IFLMALAIIDDLGAIVIIALF, LSMLSLGVAAAAIAVLMALNL, VLKSGVHATLAGVIVGFMIPL, VLHPWVAFMILPLFAFANAGV, GVTLAGLTSLLPLGIMAGLFI, IMAVGILCGIGFTMSIFIATL, and WAKLGILIGSVLSAVVGYLIL.

Belongs to the NhaA Na(+)/H(+) (TC 2.A.33) antiporter family.

Its subcellular location is the cell inner membrane. The enzyme catalyses Na(+)(in) + 2 H(+)(out) = Na(+)(out) + 2 H(+)(in). Na(+)/H(+) antiporter that extrudes sodium in exchange for external protons. The polypeptide is Na(+)/H(+) antiporter NhaA 1 (Klebsiella pneumoniae subsp. pneumoniae (strain ATCC 700721 / MGH 78578)).